Reading from the N-terminus, the 806-residue chain is Protein translocase subunit SecA (806 aa).

ATP-binding positions include glutamine 87, glycine 105–threonine 109, and aspartate 493.

This sequence belongs to the SecA family. Monomer and homodimer. Part of the essential Sec protein translocation apparatus which comprises SecA, SecYEG and auxiliary proteins SecDF. Other proteins may also be involved.

It is found in the cell membrane. It localises to the cytoplasm. The enzyme catalyses ATP + H2O + cellular proteinSide 1 = ADP + phosphate + cellular proteinSide 2.. Functionally, part of the Sec protein translocase complex. Interacts with the SecYEG preprotein conducting channel. Has a central role in coupling the hydrolysis of ATP to the transfer of proteins into and across the cell membrane, serving as an ATP-driven molecular motor driving the stepwise translocation of polypeptide chains across the membrane. The chain is Protein translocase subunit SecA from Mycoplasma genitalium (strain ATCC 33530 / DSM 19775 / NCTC 10195 / G37) (Mycoplasmoides genitalium).